The sequence spans 265 residues: tRNA pseudouridine synthase A (265 aa).

The Nucleophile role is filled by Asp53. Position 111 (Tyr111) interacts with substrate.

Belongs to the tRNA pseudouridine synthase TruA family. As to quaternary structure, homodimer.

The enzyme catalyses uridine(38/39/40) in tRNA = pseudouridine(38/39/40) in tRNA. In terms of biological role, formation of pseudouridine at positions 38, 39 and 40 in the anticodon stem and loop of transfer RNAs. This chain is tRNA pseudouridine synthase A, found in Acinetobacter baumannii (strain ACICU).